A 230-amino-acid chain; its full sequence is Orotidine 5'-phosphate decarboxylase (230 aa).

Residues Asp11, Lys34, 61–70 (DLKLHDIPNT), Thr117, Arg179, Gln188, Gly208, and Arg209 each bind substrate. Lys63 serves as the catalytic Proton donor.

It belongs to the OMP decarboxylase family. Type 1 subfamily. Homodimer.

The enzyme catalyses orotidine 5'-phosphate + H(+) = UMP + CO2. It participates in pyrimidine metabolism; UMP biosynthesis via de novo pathway; UMP from orotate: step 2/2. In terms of biological role, catalyzes the decarboxylation of orotidine 5'-monophosphate (OMP) to uridine 5'-monophosphate (UMP). This chain is Orotidine 5'-phosphate decarboxylase, found in Streptococcus equi subsp. zooepidemicus (strain H70).